The primary structure comprises 165 residues: Large ribosomal subunit protein uL10 (165 aa).

Belongs to the universal ribosomal protein uL10 family. Part of the ribosomal stalk of the 50S ribosomal subunit. The N-terminus interacts with L11 and the large rRNA to form the base of the stalk. The C-terminus forms an elongated spine to which L12 dimers bind in a sequential fashion forming a multimeric L10(L12)X complex.

Forms part of the ribosomal stalk, playing a central role in the interaction of the ribosome with GTP-bound translation factors. The chain is Large ribosomal subunit protein uL10 from Burkholderia ambifaria (strain MC40-6).